The sequence spans 421 residues: ATP-dependent RNA helicase RhlB (421 aa).

The Q motif motif lies at 9–37; it reads QKFSDFALHPKVVEALEKKGFHNCTPIQA. The 180-residue stretch at 40 to 219 folds into the Helicase ATP-binding domain; sequence LPLTLAGRDV…FEQMNNAEYI (180 aa). Residue 53–60 participates in ATP binding; the sequence is AQTGTGKT. The DEAD box signature appears at 165–168; that stretch reads DEAD. The region spanning 245–390 is the Helicase C-terminal domain; sequence RLLQTLIEEE…VSKYNPDALM (146 aa). The tract at residues 392–421 is disordered; it reads DLPKPLRLTRPRTGNGPRRTGAPRNRRRSG. Residues 402–414 are compositionally biased toward low complexity; it reads PRTGNGPRRTGAP.

The protein belongs to the DEAD box helicase family. RhlB subfamily. Component of the RNA degradosome, which is a multiprotein complex involved in RNA processing and mRNA degradation.

Its subcellular location is the cytoplasm. The enzyme catalyses ATP + H2O = ADP + phosphate + H(+). Functionally, DEAD-box RNA helicase involved in RNA degradation. Has RNA-dependent ATPase activity and unwinds double-stranded RNA. The polypeptide is ATP-dependent RNA helicase RhlB (Escherichia coli O157:H7).